A 368-amino-acid chain; its full sequence is Quinolinate synthase (368 aa).

H46 and S63 together coordinate iminosuccinate. Residue C110 participates in [4Fe-4S] cluster binding. Iminosuccinate-binding positions include 141 to 143 and S162; that span reads YVN. C230 contacts [4Fe-4S] cluster. Residues 256 to 258 and T273 contribute to the iminosuccinate site; that span reads HPE. A [4Fe-4S] cluster-binding site is contributed by C320.

Belongs to the quinolinate synthase family. Type 3 subfamily. [4Fe-4S] cluster serves as cofactor.

The protein resides in the cytoplasm. It catalyses the reaction iminosuccinate + dihydroxyacetone phosphate = quinolinate + phosphate + 2 H2O + H(+). It functions in the pathway cofactor biosynthesis; NAD(+) biosynthesis; quinolinate from iminoaspartate: step 1/1. Catalyzes the condensation of iminoaspartate with dihydroxyacetone phosphate to form quinolinate. This Bacillus cereus (strain Q1) protein is Quinolinate synthase.